A 520-amino-acid polypeptide reads, in one-letter code: Developmental regulatory protein wetA (520 aa).

Disordered regions lie at residues 49–72 (GDLP…NEWS), 104–165 (VPSR…MRSS), 236–295 (QSPS…WQSD), 367–453 (DHSF…GSNK), and 471–496 (LTGV…RRRK). Composition is skewed to polar residues over residues 63 to 72 (SPQPWSNEWS), 104 to 114 (VPSRPTASHGL), and 155 to 165 (QSFSPSLMRSS). Low complexity predominate over residues 237–251 (SPSVSMPSPSIAMSA). Polar residues predominate over residues 252-261 (RQQQHYIAQP). A compositionally biased stretch (low complexity) spans 262 to 295 (SSSSLTNSSPSSADDIFSSSHSSDPHSLSSWQSD). Over residues 367 to 401 (DHSFSSSNMLPATPQKFDTSFNTSQVHNVSRSPSL) the composition is skewed to polar residues. Residues 420-429 (PTHRRTHSRK) show a composition bias toward basic residues. Positions 436–453 (NAPKPAKASGSSSRGSNK) are enriched in low complexity.

Belongs to the wetA family.

Functionally, brlA, abaA and wetA are pivotal regulators of conidiophore development and conidium maturation. They act individually and together to regulate their own expression and that of numerous other sporulation-specific genes. Responsible for activating a set of genes whose products make up the final two conidial wall layers or direct their assembly and though this activity is responsible for acquisition of spore dormancy. The protein is Developmental regulatory protein wetA of Penicillium rubens (strain ATCC 28089 / DSM 1075 / NRRL 1951 / Wisconsin 54-1255) (Penicillium chrysogenum).